Consider the following 522-residue polypeptide: MSNRVIIFDTTLRDGEQALAASLSVKEKLQIAMALERLGVDVMEVGFPVSSPGDFESVQTIARTIKNSRVCALSRALEKDIDAAAQALSVADQFRIHTFISTSTIHVESKLKRSFDQVLEMAVSAVKYARRFTDDVEFSCEDAGRTPIENLCRMVEAAILAGARTINIPDTVGYTVPSEFGNIIQTLFNRVPNIDQAVISVHCHDDLGLSVANSITAVQHGARQIECTINGIGERAGNCSLEEIAMILATRKGMLGLETGINAKEIHRTSNLVSQLCNMPVQANKAIVGANAFTHSSGIHQDGMLKAQNTYEIMTPESIGLNRNNLNMTSRSGRHVIKHRMEEMGYSEHDYNMDALYEEFLKLADKKGQVFDYDLEALAFMEAQAEEDNHYQLQQLVVQSDSTEGVATATVRIEVGGEIKTEAATGNGPVDAAYNAIARATDRRIDIISYKLGAKGVGQNALGQVDITAVYHEQNFHGVGLATDVVEASARALVHVMNLTCRADKVADYKQSMQKNRELGGV.

In terms of domain architecture, Pyruvate carboxyltransferase spans Val-5 to His-267. Mn(2+)-binding residues include Asp-14, His-202, His-204, and Asn-238. A regulatory domain region spans residues Gln-392–Val-522.

It belongs to the alpha-IPM synthase/homocitrate synthase family. LeuA type 1 subfamily. As to quaternary structure, homodimer. It depends on Mn(2+) as a cofactor.

The protein localises to the cytoplasm. It catalyses the reaction 3-methyl-2-oxobutanoate + acetyl-CoA + H2O = (2S)-2-isopropylmalate + CoA + H(+). It participates in amino-acid biosynthesis; L-leucine biosynthesis; L-leucine from 3-methyl-2-oxobutanoate: step 1/4. In terms of biological role, catalyzes the condensation of the acetyl group of acetyl-CoA with 3-methyl-2-oxobutanoate (2-ketoisovalerate) to form 3-carboxy-3-hydroxy-4-methylpentanoate (2-isopropylmalate). The chain is 2-isopropylmalate synthase from Shewanella baltica (strain OS195).